The chain runs to 234 residues: Purine nucleoside phosphorylase DeoD-type (234 aa).

Position 4 (His-4) interacts with a purine D-ribonucleoside. Residues Gly-20, Arg-24, Arg-43, and 87 to 90 (RVGT) contribute to the phosphate site. A purine D-ribonucleoside is bound by residues Glu-162, 178–180 (EME), and 202–203 (SD). Asp-203 functions as the Proton donor in the catalytic mechanism.

It belongs to the PNP/UDP phosphorylase family. Homohexamer; trimer of homodimers.

The catalysed reaction is a purine D-ribonucleoside + phosphate = a purine nucleobase + alpha-D-ribose 1-phosphate. It carries out the reaction a purine 2'-deoxy-D-ribonucleoside + phosphate = a purine nucleobase + 2-deoxy-alpha-D-ribose 1-phosphate. In terms of biological role, catalyzes the reversible phosphorolytic breakdown of the N-glycosidic bond in the beta-(deoxy)ribonucleoside molecules, with the formation of the corresponding free purine bases and pentose-1-phosphate. Functionally, cleavage of adenosine and its derivatives. This is Purine nucleoside phosphorylase DeoD-type from Geobacillus stearothermophilus (Bacillus stearothermophilus).